A 386-amino-acid chain; its full sequence is Threonine--tRNA ligase editing subunit (386 aa).

Belongs to the class-II aminoacyl-tRNA synthetase family. Archaea-specific ThrRS editing domain subfamily. Probably interacts with its catalytic subunit (AC Q97VW8); a subunit fusion (in the order edit-catalytic) is fully functional.

The protein resides in the cytoplasm. In terms of biological role, freestanding tRNA editing subunit of threonine--tRNA ligase, the catalytic subunit is AC Q97VW8. Deacylates (edits) mischarged L-seryl-tRNA(Thr) in trans, removing L-serine, has no aminoacylation activity. In vitro when both subunits are present, or if the 2 subunits are fused, L-seryl-tRNA(Thr) is no longer produced. Has no activity on correctly acylated L-seryl-tRNA(Ser) or L-threonyl-tRNA(Thr). Editing is probably catalyzed by the 2'-OH of A76 of tRNA(Thr). The chain is Threonine--tRNA ligase editing subunit from Saccharolobus solfataricus (strain ATCC 35092 / DSM 1617 / JCM 11322 / P2) (Sulfolobus solfataricus).